The sequence spans 432 residues: MEGLAVRLLRGSRLLRRNFPTCLSSWKIPPHVSKSSQSEALLNITNNGIHFAPLQTFTDEEMMIKSSVKKFAQEQIAPLVSTMDENSKMEKSVIQGLFQQGLMGIEVDPEYGGTGASFLSTVLVIEELAKVDASVAVFCEIQNTLINTLIRKHGTEEQKGTYLPQLTTEKVGSFCLSEAGAGSDSFALKTRADKEGDYYVLNGSKMWISSAEHAGLFLVMANVDPTIGYKGITSFLVDRDTPGLHIGKPENKLGLRASSTCPLTFENVKVPETNILGQIGHGYKYAIGSLNEGRIGIAAQMLGLAQGCFDYTIPYIKERIQFGKRLFDFQGLQHQVAHVATQLEAARLLTYNAARLLEAGKPFIKEASMAKYYASEIAGQTTSKCIEWMGGVGYTKDYPVEKYFRDAKIGTIYEGASNIQLNTIAKHIDAEY.

Residues 1–33 (MEGLAVRLLRGSRLLRRNFPTCLSSWKIPPHVS) constitute a mitochondrion transit peptide. At Lys-70 the chain carries N6-acetyllysine; alternate. Position 70 is an N6-succinyllysine; alternate (Lys-70). Residues 174 to 183 (FCLSEAGAGS) and 207 to 209 (WIS) each bind FAD. Residue Ser-183 coordinates substrate. A Phosphoserine modification is found at Ser-183. Substrate-binding residues include Tyr-229 and Tyr-283. Lys-284 bears the N6-acetyllysine; alternate mark. Lys-284 carries the post-translational modification N6-succinyllysine; alternate. A substrate-binding site is contributed by 291-294 (NEGR). FAD-binding positions include Arg-319, Gln-330, and 387-391 (EWMGG). The active-site Proton acceptor is the Glu-414. 416–418 (ASN) serves as a coordination point for FAD. Lys-426 carries the post-translational modification N6-acetyllysine.

This sequence belongs to the acyl-CoA dehydrogenase family. In terms of assembly, homotetramer. The cofactor is FAD.

Its subcellular location is the mitochondrion matrix. It carries out the reaction 2-methylbutanoyl-CoA + oxidized [electron-transfer flavoprotein] + H(+) = (2E)-2-methylbut-2-enoyl-CoA + reduced [electron-transfer flavoprotein]. The catalysed reaction is (2S)-2-methylbutanoyl-CoA + oxidized [electron-transfer flavoprotein] + H(+) = (2E)-2-methylbut-2-enoyl-CoA + reduced [electron-transfer flavoprotein]. The enzyme catalyses (2R)-2-methylbutanoyl-CoA + oxidized [electron-transfer flavoprotein] + H(+) = ethylacryloyl-CoA + reduced [electron-transfer flavoprotein]. It catalyses the reaction butanoyl-CoA + oxidized [electron-transfer flavoprotein] + H(+) = (2E)-butenoyl-CoA + reduced [electron-transfer flavoprotein]. It carries out the reaction 2-methylpropanoyl-CoA + oxidized [electron-transfer flavoprotein] + H(+) = 2-methylpropenoyl-CoA + reduced [electron-transfer flavoprotein]. The catalysed reaction is hexanoyl-CoA + oxidized [electron-transfer flavoprotein] + H(+) = (2E)-hexenoyl-CoA + reduced [electron-transfer flavoprotein]. The enzyme catalyses valproyl-CoA + oxidized [electron-transfer flavoprotein] + H(+) = (2E)-2-propylpent-2-enoyl-CoA + reduced [electron-transfer flavoprotein]. It participates in lipid metabolism; mitochondrial fatty acid beta-oxidation. Its pathway is amino-acid degradation; L-isoleucine degradation. Short and branched chain specific acyl-CoA dehydrogenase that catalyzes the removal of one hydrogen from C-2 and C-3 of the fatty acyl-CoA thioester, resulting in the formation of trans-2-enoyl-CoA. Among the different mitochondrial acyl-CoA dehydrogenases, acts specifically on short and branched chain acyl-CoA derivatives such as (S)-2-methylbutyryl-CoA as well as short straight chain acyl-CoAs such as butyryl-CoA. Plays an important role in the metabolism of L-isoleucine by catalyzing the dehydrogenation of 2-methylbutyryl-CoA, one of the steps of the L-isoleucine catabolic pathway. Can also act on valproyl-CoA, a metabolite of the valproic acid drug. The protein is Short/branched chain specific acyl-CoA dehydrogenase, mitochondrial (ACADSB) of Pongo abelii (Sumatran orangutan).